The primary structure comprises 316 residues: Secondary metabolism regulator LAE1 (316 aa).

This sequence belongs to the methyltransferase superfamily. LaeA methyltransferase family. In terms of assembly, component of the heterotrimeric velvet complex composed of LAE1, VEL1 and VEL2; VEL1 acting as a bridging protein between LAE1 and VEL2. Interacts with VEL1.

The protein resides in the nucleus. It catalyses the reaction L-methionyl-[protein] + S-adenosyl-L-methionine = S-methyl-L-methionyl-[protein] + S-adenosyl-L-homocysteine. Methyltransferase that performs automethylation. No other methyl-accepting substrate has been identified yet. Component of the velvet transcription factor complex that acts as a global regulator for secondary metabolite gene expression. Controls the expression of the gibberellins gene clusters, but does not affect bikaverin production. Controls the expression of the fusaric acid gene cluster. Acts as a virulence factors during infection, most likely through activation of gibberellins biosynthesis. In Gibberella fujikuroi (strain CBS 195.34 / IMI 58289 / NRRL A-6831) (Bakanae and foot rot disease fungus), this protein is Secondary metabolism regulator LAE1.